A 361-amino-acid chain; its full sequence is ETS translocation variant 3-like protein (361 aa).

A DNA-binding region (ETS) is located at residues 39–120 (IQLWHFILEL…KGKRFTYKFN (82 aa)). The interval 178 to 201 (LTGQQTPRGPPETSGDKKGSSSSV) is disordered.

Belongs to the ETS family.

It localises to the nucleus. Functionally, transcriptional regulator. This chain is ETS translocation variant 3-like protein (ETV3L), found in Homo sapiens (Human).